A 114-amino-acid chain; its full sequence is Putative antiporter subunit mnhC2 (114 aa).

The next 3 membrane-spanning stretches (helical) occupy residues 3-23 (LILL…ILSI), 28-48 (IVIG…SMGT), and 72-92 (AIVL…LVLV).

It belongs to the CPA3 antiporters (TC 2.A.63) subunit C family. May form a heterooligomeric complex that consists of seven subunits: mnhA2, mnhB2, mnhC2, mnhD2, mnhE2, mnhF2 and mnhG2.

The protein localises to the cell membrane. This chain is Putative antiporter subunit mnhC2 (mnhC2), found in Staphylococcus aureus (strain Mu3 / ATCC 700698).